Reading from the N-terminus, the 137-residue chain is uncharacterized protein (137 aa).

This sequence belongs to the ycf72 family.

Its subcellular location is the plastid. It localises to the chloroplast. This is an uncharacterized protein from Zea mays (Maize).